Here is a 905-residue protein sequence, read N- to C-terminus: MTSPLRFEADMSMIEGEKLSPIKIPPSRLSTNTTSPDILAKHPHGLSAKQDARRNTVHNETPKGLTATPLTKKAEPLYSVNKRIPLTSPRATNQPNLDSLKKSKTKLDARLYELKSSSRHGSPSNKENMHNSGKSTQASQLSSDVNSSISHKSPFESSPSKIDTPIKQINSSFAKNVKSSPPKSSPSKADKRSIEDDSVIENSRKIAKVITNANESEVSHHKSDDEHSIQIDQVFNKEDLVGRFSSGASPAKLHEPTVIDEDSDGDIYNNEVNTSHTMTSKMRGNESTQLSRIIKITDEVDYVTPQRYTEPVAKSPEINQQHRIKENVINNTESKETISPLKNHMLSVNSDQKENHVSSNRMEDENSDGFNELEDEPTINFLLSPNSKPVFSLDHIKKVQDDHFKEVANLEEVINNKNQEILKFSEELSATNNKFLIYDQKIKELKQDKKKLIANENLLLIQLKHNERELASMTKALRIKENTVTQLESRLSKSKSKYESTANELESVIEEGNTLREQIKRLEKSVEDKSISQKEYESQIKILNDEIKEKDTEISSLTDANIDYNIKVENLLSEKEELLTETGRLGRENNGLEEINSKQQELLEELDKLENLAKDKIMTLENTLDSKTQEIKQVMTEKNELLTKIDNLTEENKNSGRELQQYKDDVEELTNKLNNYNNARSDLDDKINRLQEGLNKSNEANESLQNKVSGLLEEIERLNQHVSESETQMDLLKSINTEKDEIISGDTKKMGELVQKVNKQKQVIADYEKDYSKALEDIKSLQSKGENTSLNDEIEDLKKQVSQGQAKTNARIQEVAEQLYFEYSKKHELKVNQVRASFKKQIDNLHFEKKSQARDIDSLQKKLEIVNMEKNQLLRLIDEYQSGSDHNPKKKLSPKKSGIKKPSRY.

Residues 18-200 form a disordered region; it reads KLSPIKIPPS…KRSIEDDSVI (183 aa). The segment covering 99 to 113 has biased composition (basic and acidic residues); it reads SLKKSKTKLDARLYE. Over residues 119–174 the composition is skewed to polar residues; sequence RHGSPSNKENMHNSGKSTQASQLSSDVNSSISHKSPFESSPSKIDTPIKQINSSFA. A compositionally biased stretch (low complexity) spans 178 to 187; sequence KSSPPKSSPS. Coiled-coil stretches lie at residues 400 to 810 and 844 to 882; these read QDDH…KTNA and NLHFEKKSQARDIDSLQKKLEIVNMEKNQLLRLIDEYQS. Residues 879–905 form a disordered region; the sequence is EYQSGSDHNPKKKLSPKKSGIKKPSRY. Over residues 888-905 the composition is skewed to basic residues; the sequence is PKKKLSPKKSGIKKPSRY.

The protein belongs to the ATG23 family.

It is found in the cytoplasm. It localises to the membrane. In terms of biological role, required for cytoplasm to vacuole transport (Cvt) vesicle formation and efficient autophagy. Plays a role in ATG protein retrieval from the pre-autophagosomal structure (PAS) and is especially required for autophagy-dependent cycling of ATG9. Also plays a role in regulation of filamentous growth. This chain is Autophagy-related protein 23 (ATG23), found in Debaryomyces hansenii (strain ATCC 36239 / CBS 767 / BCRC 21394 / JCM 1990 / NBRC 0083 / IGC 2968) (Yeast).